Reading from the N-terminus, the 102-residue chain is Small ribosomal subunit protein uS10 (102 aa).

It belongs to the universal ribosomal protein uS10 family. In terms of assembly, part of the 30S ribosomal subunit.

Its function is as follows. Involved in the binding of tRNA to the ribosomes. This chain is Small ribosomal subunit protein uS10, found in Clostridium kluyveri (strain NBRC 12016).